The sequence spans 444 residues: Forkhead box protein F2 (444 aa).

The tract at residues 32–98 is disordered; it reads PAAAAAAAAA…KKASSGLRRP (67 aa). Low complexity predominate over residues 34-75; sequence AAAAAAAAPETTSSSSSSSSASCASSSSSSNSASAPSAACKS. The segment covering 76 to 87 has biased composition (gly residues); sequence AGGGGAGAGSGG. A DNA-binding region (fork-head) is located at residues 99–190; that stretch reads EKPPYSYIAL…EFMFEEGSFR (92 aa). Disordered regions lie at residues 256 to 323 and 338 to 367; these read GAGA…SPAM and AHWS…SAGL. Residues 263-274 are compositionally biased toward basic residues; it reads AHPHHHHHHHVP. Positions 293–308 are enriched in gly residues; that stretch reads GPGGVGAAGGGGGGDY. A compositionally biased stretch (low complexity) spans 309 to 323; that stretch reads GPDSSSSPVPSSPAM.

In terms of assembly, interacts with the transcription factors TBP and TFIIB. Lung and placenta. Predominantly expressed in gastrointestinal tract including stomach.

Its subcellular location is the nucleus. Its function is as follows. Probable transcription activator for a number of lung-specific genes. Mediates up-regulation of the E3 ligase IRF2BPL and drives ubiquitination and degradation of CTNNB1. This is Forkhead box protein F2 (FOXF2) from Homo sapiens (Human).